The chain runs to 796 residues: Phenylalanine--tRNA ligase beta subunit (796 aa).

In terms of domain architecture, tRNA-binding spans 39-149; sequence SAALKSFRVA…GDAPLGTTFA (111 aa). The region spanning 398–470 is the B5 domain; sequence LARKALAYDP…RVHGLDAVPS (73 aa). Mg(2+)-binding residues include D448, D454, E457, and E458. The 93-residue stretch at 703–795 folds into the FDX-ACB domain; sequence PALQAVTRDF…AAGKLGAELR (93 aa).

Belongs to the phenylalanyl-tRNA synthetase beta subunit family. Type 1 subfamily. Tetramer of two alpha and two beta subunits. It depends on Mg(2+) as a cofactor.

It localises to the cytoplasm. The enzyme catalyses tRNA(Phe) + L-phenylalanine + ATP = L-phenylalanyl-tRNA(Phe) + AMP + diphosphate + H(+). This is Phenylalanine--tRNA ligase beta subunit from Novosphingobium aromaticivorans (strain ATCC 700278 / DSM 12444 / CCUG 56034 / CIP 105152 / NBRC 16084 / F199).